Reading from the N-terminus, the 217-residue chain is Enoyl-CoA-hydratase (217 aa).

It belongs to the enoyl-CoA hydratase/isomerase family.

The catalysed reaction is a (3S)-3-hydroxyacyl-CoA = a (2E)-enoyl-CoA + H2O. It catalyses the reaction a 4-saturated-(3S)-3-hydroxyacyl-CoA = a (3E)-enoyl-CoA + H2O. It functions in the pathway antibiotic biosynthesis; vancomycin biosynthesis. In terms of biological role, involved in the biosynthesis of the nonproteinogenic amino acid monomer (S)-3,5-dihydroxyphenylglycine (Dpg) responsible of the production of vancomycin and teicoplanin antibiotics. Catalyzes the syn-addition of a water molecule across the double bond of a trans-2-enoyl-CoA thioester, resulting in the formation of a beta-hydroxyacyl-CoA thioester. Physiologically, DpgB could act as a dehydratase, facilitating the aromatization of the DPA-S-DgpA or DPA-S-CoA intermediate. The chain is Enoyl-CoA-hydratase (dpgB) from Amycolatopsis orientalis (Nocardia orientalis).